The chain runs to 99 residues: Large ribosomal subunit protein bL28 (99 aa).

Belongs to the bacterial ribosomal protein bL28 family.

The polypeptide is Large ribosomal subunit protein bL28 (Rhodospirillum rubrum (strain ATCC 11170 / ATH 1.1.1 / DSM 467 / LMG 4362 / NCIMB 8255 / S1)).